We begin with the raw amino-acid sequence, 330 residues long: Polyprenal reductase (330 aa).

Topologically, residues 1-16 (MAGWAGFELSALNPLR) are cytoplasmic. A helical transmembrane segment spans residues 17–37 (TLWLALAAAFLFALLLQLAPA). The Lumenal portion of the chain corresponds to 38–80 (RLLPSCALFQDLLRYGKTKQSGSRRPAVCRAFDVPKRYFSHFY). The chain crosses the membrane as a helical span at residues 81-101 (VISVVWNGSLLWLLSQSLFLG). At 102 to 132 (APFPNWLSALLRTLGATQFQALEMESKASRM) the chain is on the cytoplasmic side. The helical transmembrane segment at 133–153 (PAAELALSAFLVLVFLWVHSL) threads the bilayer. Topologically, residues 154 to 169 (RRLFECFYVSVFSNAA) are lumenal. A helical transmembrane segment spans residues 170-190 (IHVVQYCFGLVYYVLVGLTVL). The Cytoplasmic segment spans residues 191–206 (SQVPMDDKNVYVLGKN). A helical membrane pass occupies residues 207-227 (LLIQARWFHILGMVMFFWSSA). Residues 228 to 277 (HQYKCHVILSNLRRNKKGVVIHCQHRIPFGDWFEYVSSANYLAELMIYIS) are Lumenal-facing. Residues 278–298 (MAVTFGLHNLTWWLVVTYVFS) form a helical membrane-spanning segment. Residues 299-330 (SQALSAFFNHKFYRSTFVSYPKHRKAFLPFLF) lie on the Cytoplasmic side of the membrane.

It belongs to the steroid 5-alpha reductase family. Polyprenal reductase subfamily.

It is found in the endoplasmic reticulum membrane. The enzyme catalyses a di-trans,poly-cis-dolichal + NADP(+) = a di-trans,poly-cis-polyprenal + NADPH + H(+). It carries out the reaction a 3-oxo-5alpha-steroid + NADP(+) = a 3-oxo-Delta(4)-steroid + NADPH + H(+). It catalyses the reaction androst-4-ene-3,17-dione + NADPH + H(+) = 5alpha-androstan-3,17-dione + NADP(+). The catalysed reaction is 17beta-hydroxy-5alpha-androstan-3-one + NADP(+) = testosterone + NADPH + H(+). It functions in the pathway protein modification; protein glycosylation. In terms of biological role, plays a key role in early steps of protein N-linked glycosylation by being involved in the conversion of polyprenol into dolichol. Acts as a polyprenal reductase that mediates the reduction of polyprenal into dolichal in a NADP-dependent mechanism. Dolichols are required for the synthesis of dolichol-linked monosaccharides and the oligosaccharide precursor used for N-glycosylation. Also able to convert testosterone (T) into 5-alpha-dihydrotestosterone (DHT). The chain is Polyprenal reductase from Mus musculus (Mouse).